A 315-amino-acid polypeptide reads, in one-letter code: Diacylglycerol kinase (315 aa).

One can recognise a DAGKc domain in the interval 1–132 (MRKRARIIYN…VDIGKMNNRY (132 aa)). Residues 10-14 (NPTSG), Thr41, 67-73 (GDGTLNE), and Thr94 contribute to the ATP site. The Mg(2+) site is built by Lys213, Asp216, and Tyr218. The active-site Proton acceptor is Glu273.

Belongs to the diacylglycerol/lipid kinase family. As to quaternary structure, homodimer. The cofactor is Mg(2+).

It carries out the reaction a 1,2-diacyl-sn-glycerol + ATP = a 1,2-diacyl-sn-glycero-3-phosphate + ADP + H(+). Functionally, catalyzes the phosphorylation of diacylglycerol (DAG) into phosphatidic acid. Is a key enzyme involved in the production of lipoteichoic acid by reintroducing DAG formed from the breakdown of membrane phospholipids into the phosphatidylglycerol biosynthetic pathway. The protein is Diacylglycerol kinase (dagK) of Staphylococcus aureus (strain MRSA252).